Reading from the N-terminus, the 96-residue chain is Ferredoxin-1 (96 aa).

The 2Fe-2S ferredoxin-type domain occupies 1–95 (MKVIINGKEF…DCDEIVIESE (95 aa)). Residues cysteine 34, cysteine 39, cysteine 42, and cysteine 78 each coordinate [2Fe-2S] cluster. Cysteine 52 and cysteine 87 form a disulfide bridge.

It belongs to the 2Fe2S plant-type ferredoxin family. It depends on [2Fe-2S] cluster as a cofactor.

Functionally, ferredoxins are iron-sulfur proteins that transfer electrons in a wide variety of metabolic reactions. This chain is Ferredoxin-1 (fdx1), found in Aquifex aeolicus (strain VF5).